Here is a 264-residue protein sequence, read N- to C-terminus: Tetraspanin-12 (264 aa).

Over 1–13 (MLRLSNAAVITTN) the chain is Cytoplasmic. A helical transmembrane segment spans residues 14–34 (AILALIGLAALSFSVYVYVQG). The Extracellular segment spans residues 35–45 (PSQCQRFVQNP). A helical membrane pass occupies residues 46 to 66 (LIVTAALLFFISSLGLIAALY). The Cytoplasmic portion of the chain corresponds to 67 to 75 (GSHIIITLY). Residues 76–96 (LFFLFLSILLLLVLSVFIFLV) form a helical membrane-spanning segment. The Extracellular segment spans residues 97–228 (TNPTAGKALS…VLKGIRKRWR (132 aa)). Asn180 carries an N-linked (GlcNAc...) asparagine glycan. Residues 229–249 (ILIVVNLLLILLVVFLYSCGC) form a helical membrane-spanning segment. The Cytoplasmic portion of the chain corresponds to 250 to 264 (CVRKNNRVPWKRRFF).

It belongs to the tetraspanin (TM4SF) family.

Its subcellular location is the membrane. May be involved in the regulation of cell differentiation. In Arabidopsis thaliana (Mouse-ear cress), this protein is Tetraspanin-12 (TET12).